The sequence spans 285 residues: MFRLLVLMGFTFFFYHLHASGNLTKYINMKYAYLSFIAIFLLAILTAVQAYLFIKSPEKSGHHHDHDCGCGHDHEHDHEQNKPFYQRYLIYVVFLFPLVSGIFFPIATLDSSIVKTKGFSFKAMESGDHYSQTQYLRPDASLYYAQDSYDKQMKQLFNKYSSKKEISLTDDDFLKGMETIYNYPGEFLGRTIEFHGFAYKGNAINKNQLFVLRFGIIHCIADSGVYGMLVEFPKDMDIKDDEWIHIKGTLASEYYQPFKSTLPVVKVTDWNTIKKPDDPYVYRGF.

4 consecutive transmembrane segments (helical) span residues 4–24 (LLVL…GNLT), 34–54 (LSFI…YLFI), 89–109 (LIYV…IATL), and 210–230 (FVLR…GMLV).

The protein belongs to the UPF0703 family.

Its subcellular location is the cell membrane. This Bacillus subtilis (strain 168) protein is UPF0703 protein YcgQ (ycgQ).